We begin with the raw amino-acid sequence, 29 residues long: Potassium channel toxin alpha-KTx 8.4 (29 aa).

3 disulfides stabilise this stretch: Cys-3/Cys-19, Cys-6/Cys-24, and Cys-10/Cys-26.

It belongs to the short scorpion toxin superfamily. Potassium channel inhibitor family. Alpha-KTx 08 subfamily. In terms of tissue distribution, expressed by the venom gland.

The protein localises to the secreted. In terms of biological role, inhibits voltage-gated potassium channels. This is Potassium channel toxin alpha-KTx 8.4 from Leiurus hebraeus (Hebrew deathstalker scorpion).